The sequence spans 264 residues: 2-hydroxyhexa-2,4-dienoate hydratase (264 aa).

Belongs to the hydratase/decarboxylase family.

The enzyme catalyses (2Z,4Z)-2-hydroxyhexa-2,4-dienoate + H2O = 4-hydroxy-2-oxohexanoate. In terms of biological role, involved in the catatabolism of testosterone. Catalyzes the hydration of 2-hydroxyhexa-2,4-dienoic acid to 4-hydroxy-2-oxohexanoic acid. The chain is 2-hydroxyhexa-2,4-dienoate hydratase (tesE) from Comamonas testosteroni (Pseudomonas testosteroni).